Reading from the N-terminus, the 251-residue chain is Triosephosphate isomerase (251 aa).

Substrate is bound at residue 9-11 (NWK). The active-site Electrophile is H95. The Proton acceptor role is filled by E167. Substrate-binding positions include G173, S213, and 234 to 235 (GG). A Phosphoserine modification is found at S213.

It belongs to the triosephosphate isomerase family. Homodimer.

The protein localises to the cytoplasm. The catalysed reaction is D-glyceraldehyde 3-phosphate = dihydroxyacetone phosphate. Its pathway is carbohydrate biosynthesis; gluconeogenesis. It functions in the pathway carbohydrate degradation; glycolysis; D-glyceraldehyde 3-phosphate from glycerone phosphate: step 1/1. Involved in the gluconeogenesis. Catalyzes stereospecifically the conversion of dihydroxyacetone phosphate (DHAP) to D-glyceraldehyde-3-phosphate (G3P). This is Triosephosphate isomerase from Priestia megaterium (strain DSM 319 / IMG 1521) (Bacillus megaterium).